We begin with the raw amino-acid sequence, 362 residues long: Phosphoserine aminotransferase (362 aa).

Positions 9 and 42 each coordinate L-glutamate. Residues 76–77 (GR), W102, T153, D174, and Q197 contribute to the pyridoxal 5'-phosphate site. Position 198 is an N6-(pyridoxal phosphate)lysine (K198). 239 to 240 (NT) is a pyridoxal 5'-phosphate binding site.

It belongs to the class-V pyridoxal-phosphate-dependent aminotransferase family. SerC subfamily. Homodimer. Requires pyridoxal 5'-phosphate as cofactor.

The protein resides in the cytoplasm. It carries out the reaction O-phospho-L-serine + 2-oxoglutarate = 3-phosphooxypyruvate + L-glutamate. It catalyses the reaction 4-(phosphooxy)-L-threonine + 2-oxoglutarate = (R)-3-hydroxy-2-oxo-4-phosphooxybutanoate + L-glutamate. It functions in the pathway amino-acid biosynthesis; L-serine biosynthesis; L-serine from 3-phospho-D-glycerate: step 2/3. The protein operates within cofactor biosynthesis; pyridoxine 5'-phosphate biosynthesis; pyridoxine 5'-phosphate from D-erythrose 4-phosphate: step 3/5. In terms of biological role, catalyzes the reversible conversion of 3-phosphohydroxypyruvate to phosphoserine and of 3-hydroxy-2-oxo-4-phosphonooxybutanoate to phosphohydroxythreonine. This is Phosphoserine aminotransferase from Shigella boydii serotype 4 (strain Sb227).